Consider the following 345-residue polypeptide: Phosphoribosylformylglycinamidine cyclo-ligase (345 aa).

Belongs to the AIR synthase family.

The protein localises to the cytoplasm. The enzyme catalyses 2-formamido-N(1)-(5-O-phospho-beta-D-ribosyl)acetamidine + ATP = 5-amino-1-(5-phospho-beta-D-ribosyl)imidazole + ADP + phosphate + H(+). Its pathway is purine metabolism; IMP biosynthesis via de novo pathway; 5-amino-1-(5-phospho-D-ribosyl)imidazole from N(2)-formyl-N(1)-(5-phospho-D-ribosyl)glycinamide: step 2/2. This chain is Phosphoribosylformylglycinamidine cyclo-ligase, found in Lactobacillus acidophilus (strain ATCC 700396 / NCK56 / N2 / NCFM).